Reading from the N-terminus, the 243-residue chain is MKKQPGSFLFDGKAKTIFTTDKPYELLVHFKNDATAFNALKHAELEGKGKLNCQISASLFQLLEKEGVPTHFLGVQDETWMLVQKVDVIPLEIVVRNIACGSLCKETPLERGEKLSSPLLDFYYKDDQLGDPLLTDARLNLLGLTTSGQRLEIQSIAFKVNNILKNFFQKIDLLLVDFKLEMGLNNAGELLVADEISPDSCRLWDQRSDDPEQRILDKDRFRQDLGGVVEAYGEILKRIQGNP.

Belongs to the SAICAR synthetase family.

The enzyme catalyses 5-amino-1-(5-phospho-D-ribosyl)imidazole-4-carboxylate + L-aspartate + ATP = (2S)-2-[5-amino-1-(5-phospho-beta-D-ribosyl)imidazole-4-carboxamido]succinate + ADP + phosphate + 2 H(+). It functions in the pathway purine metabolism; IMP biosynthesis via de novo pathway; 5-amino-1-(5-phospho-D-ribosyl)imidazole-4-carboxamide from 5-amino-1-(5-phospho-D-ribosyl)imidazole-4-carboxylate: step 1/2. This is Phosphoribosylaminoimidazole-succinocarboxamide synthase from Prochlorococcus marinus (strain MIT 9211).